Reading from the N-terminus, the 118-residue chain is BolA-like protein 3 (118 aa).

The protein belongs to the BolA/IbaG family. As to quaternary structure, interacts with NFU1.

The protein resides in the mitochondrion matrix. Its function is as follows. Acts as a mitochondrial iron-sulfur (Fe-S) cluster assembly factor that facilitates [4Fe-4S] cluster insertion into a subset of mitochondrial proteins such as lipoyl synthase (LS) and succinate dehydrogenase (SDH). Required during the last step of iron-sulfur protein assembly when the iron-sulfur cluster is inserted into the target protein. Acts together with NFU1, later than BOL1 and GRX5 in the [4Fe-4S] cluster insertion process. Not required for [2Fe-2S] cluster insertion into mitochondrial proteins. This Saccharomyces cerevisiae (strain ATCC 204508 / S288c) (Baker's yeast) protein is BolA-like protein 3.